Here is a 477-residue protein sequence, read N- to C-terminus: Interferon gamma receptor 1 (477 aa).

The signal sequence occupies residues 1–25; the sequence is MGPQAAAGRMILLVVLMLSAKVGSG. The Extracellular portion of the chain corresponds to 26–254; sequence ALTSTEDPEP…PPFHDDRKDS (229 aa). 2 N-linked (GlcNAc...) asparagine glycosylation sites follow: asparagine 61 and asparagine 85. 4 cysteine pairs are disulfide-bonded: cysteine 83-cysteine 91, cysteine 128-cysteine 174, cysteine 203-cysteine 208, and cysteine 222-cysteine 243. Residues 255–275 form a helical membrane-spanning segment; sequence IWILVVAPLTVFTVVILVFAY. The Cytoplasmic portion of the chain corresponds to 276–477; the sequence is WYTKKNSFKR…RLTGEAQELS (202 aa). Disordered stretches follow at residues 335-386 and 402-446; these read TVTA…LSSN and SDSG…SGYD. The residue at position 362 (serine 362) is a Phosphoserine. A Phosphothreonine modification is found at threonine 367. A Phosphoserine modification is found at serine 370. Residues threonine 373 and threonine 375 each carry the phosphothreonine modification. Over residues 375–386 the composition is skewed to polar residues; it reads TQRRSFSLLSSN. 2 positions are modified to phosphoserine: serine 379 and serine 402. Low complexity predominate over residues 402-416; sequence SDSGLVGSGSSISDL. Position 445 is a phosphotyrosine (tyrosine 445).

It belongs to the type II cytokine receptor family. As to quaternary structure, monomer. Heterodimer with IFNGR2, to form the IFNG receptor complex. Interacts with JAK1. Interacts (when phosphorylated) with STAT1. Interacts with SOCS1. Phosphorylated at Ser/Thr residues. Phosphorylation of Tyr-445 is required for IFNG receptor signal transduction. Influenza virus infection leads to phosphorylation in a CSNK1A1-dependent manner. Post-translationally, ubiquitinated after phosphorylation in a CSNK1A1-dependent manner, leading to the lysosome-dependent degradation. Proteasomally degraded through 'Lys-48'-mediated ubiquitination. Ubiquitination is necessary for efficient IFNGR1 signaling.

It localises to the cell membrane. Functionally, receptor subunit for interferon gamma/INFG that plays crucial roles in antimicrobial, antiviral, and antitumor responses by activating effector immune cells and enhancing antigen presentation (, PubMed:20926559, PubMed:27286456). Associates with transmembrane accessory factor IFNGR2 to form a functional receptor. Upon ligand binding, the intracellular domain of IFNGR1 opens out to allow association of downstream signaling components JAK1 and JAK2. In turn, activated JAK1 phosphorylates IFNGR1 to form a docking site for STAT1. Subsequent phosphorylation of STAT1 leads to its dimerization, translocation to the nucleus, and stimulation of target gene transcription. STAT3 can also be activated in a similar manner although activation seems weaker. IFNGR1 intracellular domain phosphorylation also provides a docking site for SOCS1 that regulates the JAK-STAT pathway by competing with STAT1 binding to IFNGR1. This is Interferon gamma receptor 1 from Mus musculus (Mouse).